The following is a 131-amino-acid chain: uncharacterized protein (131 aa).

This is an uncharacterized protein from Bacillus subtilis (strain 168).